The primary structure comprises 512 residues: Cobyric acid synthase (512 aa).

One can recognise a GATase cobBQ-type domain in the interval 254–455 (EIDIAVVKLP…LHGLFDNKAL (202 aa)). Cys335 functions as the Nucleophile in the catalytic mechanism. His447 is a catalytic residue.

The protein belongs to the CobB/CobQ family. CobQ subfamily.

The protein operates within cofactor biosynthesis; adenosylcobalamin biosynthesis. In terms of biological role, catalyzes amidations at positions B, D, E, and G on adenosylcobyrinic A,C-diamide. NH(2) groups are provided by glutamine, and one molecule of ATP is hydrogenolyzed for each amidation. This is Cobyric acid synthase from Desulforamulus reducens (strain ATCC BAA-1160 / DSM 100696 / MI-1) (Desulfotomaculum reducens).